The sequence spans 456 residues: Alcohol acyltransferase 1 (456 aa).

Residues His-166 and Asp-382 each act as proton acceptor in the active site.

It belongs to the plant acyltransferase family. In terms of tissue distribution, expressed in fruit.

The catalysed reaction is 3-(methylsulfanyl)propanoyl-CoA + butan-1-ol = butyl 3-(methylsulfanyl)propanoate + CoA. It carries out the reaction ethanol + benzoyl-CoA = ethyl benzoate + CoA. The enzyme catalyses butan-1-ol + benzoyl-CoA = butyl benzoate + CoA. It catalyses the reaction 2-(methylsulfanyl)acetyl-CoA + butan-1-ol = butyl 2-(methylsulfanyl)acetate + CoA. In terms of biological role, involved in the biosynthesis of volatile esters which confer kiwifruit flavor. Alcohol acyl transferase that can use a wide range of alcohols as substrate to produce esters. Exhibits benzoyl-CoA:alcohol O-acyltransferase activity. The sequence is that of Alcohol acyltransferase 1 from Actinidia deliciosa (Kiwi).